Consider the following 333-residue polypeptide: Transcription initiation factor IIB (333 aa).

The segment at 33-64 (EVYKCPICGNDKFVYNYERGEAVCIVCGAVVQ) adopts a TFIIB-type zinc-finger fold. Zn(2+)-binding residues include cysteine 37, cysteine 40, cysteine 56, and cysteine 59. A run of 2 repeats spans residues 149-232 (QELE…LREL) and 243-324 (LYIS…ELAK).

This sequence belongs to the TFIIB family.

Its function is as follows. Stabilizes TBP binding to an archaeal box-A promoter. Also responsible for recruiting RNA polymerase II to the pre-initiation complex (DNA-TBP-TFIIB). The sequence is that of Transcription initiation factor IIB from Pyrobaculum aerophilum (strain ATCC 51768 / DSM 7523 / JCM 9630 / CIP 104966 / NBRC 100827 / IM2).